The primary structure comprises 447 residues: Phosphoglucosamine mutase (447 aa).

The active-site Phosphoserine intermediate is Ser100. Residues Ser100, Asp239, Asp241, and Asp243 each coordinate Mg(2+). At Ser100 the chain carries Phosphoserine.

Belongs to the phosphohexose mutase family. The cofactor is Mg(2+). Activated by phosphorylation.

It carries out the reaction alpha-D-glucosamine 1-phosphate = D-glucosamine 6-phosphate. Catalyzes the conversion of glucosamine-6-phosphate to glucosamine-1-phosphate. The sequence is that of Phosphoglucosamine mutase from Dictyoglomus turgidum (strain DSM 6724 / Z-1310).